Consider the following 670-residue polypeptide: DNA ligase (670 aa).

NAD(+) contacts are provided by residues 36–40, 85–86, and Glu116; these read DAQYD and SL. Residue Lys118 is the N6-AMP-lysine intermediate of the active site. Arg139, Glu174, Lys290, and Lys314 together coordinate NAD(+). Zn(2+) is bound by residues Cys408, Cys411, Cys426, and Cys431. Residues 591-670 enclose the BRCT domain; the sequence is STDQTLSGKT…QDFVKLLQQQ (80 aa).

This sequence belongs to the NAD-dependent DNA ligase family. LigA subfamily. Mg(2+) is required as a cofactor. Requires Mn(2+) as cofactor.

The catalysed reaction is NAD(+) + (deoxyribonucleotide)n-3'-hydroxyl + 5'-phospho-(deoxyribonucleotide)m = (deoxyribonucleotide)n+m + AMP + beta-nicotinamide D-nucleotide.. DNA ligase that catalyzes the formation of phosphodiester linkages between 5'-phosphoryl and 3'-hydroxyl groups in double-stranded DNA using NAD as a coenzyme and as the energy source for the reaction. It is essential for DNA replication and repair of damaged DNA. This chain is DNA ligase, found in Desulforamulus reducens (strain ATCC BAA-1160 / DSM 100696 / MI-1) (Desulfotomaculum reducens).